Here is a 409-residue protein sequence, read N- to C-terminus: Elongation factor Tu (409 aa).

A tr-type G domain is found at 10-214; that stretch reads KPHVNIGTIG…EVDGYIPQPE (205 aa). A G1 region spans residues 19-26; it reads GHVDHGKT. 19-26 serves as a coordination point for GTP; the sequence is GHVDHGKT. T26 contributes to the Mg(2+) binding site. The tract at residues 60 to 64 is G2; sequence GITIN. The tract at residues 81 to 84 is G3; the sequence is DCPG. GTP is bound by residues 81–85 and 136–139; these read DCPGH and NKQD. The segment at 136 to 139 is G4; sequence NKQD. Residues 174-176 form a G5 region; sequence SAL.

The protein belongs to the TRAFAC class translation factor GTPase superfamily. Classic translation factor GTPase family. EF-Tu/EF-1A subfamily. Monomer.

Its subcellular location is the cytoplasm. The enzyme catalyses GTP + H2O = GDP + phosphate + H(+). GTP hydrolase that promotes the GTP-dependent binding of aminoacyl-tRNA to the A-site of ribosomes during protein biosynthesis. This Trichodesmium erythraeum (strain IMS101) protein is Elongation factor Tu.